The following is a 149-amino-acid chain: Putative inactive group IIC secretory phospholipase A2 (149 aa).

Positions methionine 1 to serine 18 are cleaved as a signal peptide. 4 disulfide bridges follow: cysteine 44–cysteine 142, cysteine 77–cysteine 107, cysteine 95–cysteine 112, and cysteine 97–cysteine 105. Ca(2+) contacts are provided by tyrosine 45, glycine 47, and glycine 49.

This sequence belongs to the phospholipase A2 family. It depends on Ca(2+) as a cofactor.

It localises to the secreted. Its function is as follows. Inactive phospholipase. The sequence is that of Putative inactive group IIC secretory phospholipase A2 (PLA2G2C) from Homo sapiens (Human).